We begin with the raw amino-acid sequence, 64 residues long: Large ribosomal subunit protein bL28 (64 aa).

This sequence belongs to the bacterial ribosomal protein bL28 family.

In Campylobacter jejuni subsp. doylei (strain ATCC BAA-1458 / RM4099 / 269.97), this protein is Large ribosomal subunit protein bL28.